A 1023-amino-acid polypeptide reads, in one-letter code: Sodium/potassium-transporting ATPase subunit alpha-1 (1023 aa).

A propeptide spanning residues 1-5 (MGKGV) is cleaved from the precursor. A compositionally biased stretch (basic and acidic residues) spans 1 to 11 (MGKGVGRDKYE). Residues 1-39 (MGKGVGRDKYEPAAVSEHGDKKGKKAKKERDMDELKKEV) are disordered. The Cytoplasmic segment spans residues 6 to 96 (GRDKYEPAAV…PEWVKFCRQL (91 aa)). Lysine 9 is subject to N6-acetyllysine. At tyrosine 10 the chain carries Phosphotyrosine. Serine 16 bears the Phosphoserine mark. Lysine 21 is modified (N6-acetyllysine). The segment covering 28 to 39 (KERDMDELKKEV) has biased composition (basic and acidic residues). 2 positions are modified to phosphoserine: serine 40 and serine 47. Positions 82–84 (PPP) are phosphoinositide-3 kinase binding. Residues 97 to 117 (FGGFSMLLWIGAILCFLAYGI) form a helical membrane-spanning segment. Residues 118 to 129 (RSATEEEPPNDD) are Extracellular-facing. A helical membrane pass occupies residues 130-150 (LYLGVVLSAVVIITGCFSYYQ). At 151-291 (EAKSSKIMES…TPIAEEIEHF (141 aa)) the chain is on the cytoplasmic side. The tract at residues 216 to 235 (SSLTGESEPQTRSPDFTNEN) is disordered. Phosphoserine is present on serine 228. Residue tyrosine 260 is modified to Phosphotyrosine. Residues 292–312 (IHLITGVAVFLGVSFFILSLI) form a helical membrane-spanning segment. Residues 313-319 (LEYTWLE) are Extracellular-facing. A helical membrane pass occupies residues 320–340 (AVIFLIGIIVANVPEGLLATV). Topologically, residues 341-775 (TVCLTLTAKR…RLIFDNLKKS (435 aa)) are cytoplasmic. Catalysis depends on aspartate 376, which acts as the 4-aspartylphosphate intermediate. 2 positions are modified to phosphoserine: serine 452 and serine 484. An ATP-binding site is contributed by lysine 487. The residue at position 542 (tyrosine 542) is a Phosphotyrosine. Residues 596–717 (RAAVPDAVGK…QGAIVAVTGD (122 aa)) are mediates interaction with SCN7A. N6-succinyllysine is present on lysine 661. Phosphoserine occurs at positions 668 and 675. Residues aspartate 717 and aspartate 721 each coordinate Mg(2+). A helical membrane pass occupies residues 776–798 (IAYTLTSNIPEITPFLIFIIANI). The Extracellular segment spans residues 799–801 (PLP). The chain crosses the membrane as a helical span at residues 802–824 (LGTVTILCIDLGTDMVPAISLAY). Residues 825–849 (EQAESDIMKRQPRNPKTDKLVNERL) are Cytoplasmic-facing. A helical membrane pass occupies residues 850–872 (ISMAYGQIGMIQALGGFFTYFVI). Residues 873-915 (LAENGFLPFHLLGIRETWDDRWVNDVEDSYGQQWTYEQRKIVE) lie on the Extracellular side of the membrane. A helical transmembrane segment spans residues 916-936 (FTCHTAFFVSIVVVQWADLVI). Topologically, residues 937–952 (CKTRRNSVFQQGMKNK) are cytoplasmic. Serine 943 carries the phosphoserine; by PKA modification. A helical transmembrane segment spans residues 953 to 973 (ILIFGLFEETALAAFLSYCPG). The Extracellular portion of the chain corresponds to 974–979 (MGAALR). The chain crosses the membrane as a helical span at residues 980 to 1000 (MYPLKPTWWFCAFPYSLLIFV). The Cytoplasmic segment spans residues 1001–1023 (YDEVRKLIIRRRPGGWVEKETYY).

It belongs to the cation transport ATPase (P-type) (TC 3.A.3) family. Type IIC subfamily. As to quaternary structure, the sodium/potassium-transporting ATPase is composed of a catalytic alpha subunit, an auxiliary non-catalytic beta subunit and an additional regulatory subunit. Interacts with regulatory subunit FXYD1. Interacts with regulatory subunit FXYD3. Interacts with SIK1. Interacts with SLC35G1 and STIM1. Interacts with CLN3; this interaction regulates the sodium/potassium-transporting ATPase complex localization at the plasma membrane. Interacts with SCN7A; activates ATP1A1 P-type sodium:potassium-exchanging transporter activity which indirectly signals to nearby neurons to regulate sodium homeostasis. In terms of processing, phosphorylation on Tyr-10 modulates pumping activity. Phosphorylation of Ser-943 by PKA modulates the response of ATP1A1 to PKC. Dephosphorylation by protein phosphatase 2A (PP2A) following increases in intracellular sodium, leading to increase catalytic activity.

Its subcellular location is the cell membrane. It is found in the basolateral cell membrane. It localises to the sarcolemma. The protein localises to the cell projection. The protein resides in the axon. Its subcellular location is the melanosome. It carries out the reaction K(+)(out) + Na(+)(in) + ATP + H2O = K(+)(in) + Na(+)(out) + ADP + phosphate + H(+). In terms of biological role, this is the catalytic component of the active enzyme, which catalyzes the hydrolysis of ATP coupled with the exchange of sodium and potassium ions across the plasma membrane. This action creates the electrochemical gradient of sodium and potassium ions, providing the energy for active transport of various nutrients. Could also be part of an osmosensory signaling pathway that senses body-fluid sodium levels and controls salt intake behavior as well as voluntary water intake to regulate sodium homeostasis. This chain is Sodium/potassium-transporting ATPase subunit alpha-1 (Atp1a1), found in Mus musculus (Mouse).